The chain runs to 448 residues: Signal recognition particle 54 kDa protein (448 aa).

Residues 107 to 114 (GIQGSGKT), 189 to 193 (DSAGR), and 247 to 250 (TKLD) contribute to the GTP site.

The protein belongs to the GTP-binding SRP family. SRP54 subfamily. Part of the signal recognition particle protein translocation system, which is composed of SRP and FtsY. Archaeal SRP consists of a 7S RNA molecule of 300 nucleotides and two protein subunits: SRP54 and SRP19.

The protein resides in the cytoplasm. The enzyme catalyses GTP + H2O = GDP + phosphate + H(+). Involved in targeting and insertion of nascent membrane proteins into the cytoplasmic membrane. Binds to the hydrophobic signal sequence of the ribosome-nascent chain (RNC) as it emerges from the ribosomes. The SRP-RNC complex is then targeted to the cytoplasmic membrane where it interacts with the SRP receptor FtsY. The chain is Signal recognition particle 54 kDa protein from Thermococcus onnurineus (strain NA1).